Here is a 641-residue protein sequence, read N- to C-terminus: 1-deoxy-D-xylulose-5-phosphate synthase (641 aa).

Residues H79 and 120 to 122 (AHS) contribute to the thiamine diphosphate site. D151 contacts Mg(2+). Thiamine diphosphate-binding positions include 152–153 (GS), N180, Y290, and E372. N180 is a Mg(2+) binding site.

Belongs to the transketolase family. DXPS subfamily. As to quaternary structure, homodimer. Mg(2+) serves as cofactor. Requires thiamine diphosphate as cofactor.

The enzyme catalyses D-glyceraldehyde 3-phosphate + pyruvate + H(+) = 1-deoxy-D-xylulose 5-phosphate + CO2. It functions in the pathway metabolic intermediate biosynthesis; 1-deoxy-D-xylulose 5-phosphate biosynthesis; 1-deoxy-D-xylulose 5-phosphate from D-glyceraldehyde 3-phosphate and pyruvate: step 1/1. In terms of biological role, catalyzes the acyloin condensation reaction between C atoms 2 and 3 of pyruvate and glyceraldehyde 3-phosphate to yield 1-deoxy-D-xylulose-5-phosphate (DXP). The chain is 1-deoxy-D-xylulose-5-phosphate synthase from Rhodopseudomonas palustris (strain BisB18).